A 274-amino-acid chain; its full sequence is UPF0173 metal-dependent hydrolase A2cp1_1196 (274 aa).

This sequence belongs to the UPF0173 family.

This is UPF0173 metal-dependent hydrolase A2cp1_1196 from Anaeromyxobacter dehalogenans (strain 2CP-1 / ATCC BAA-258).